The sequence spans 71 residues: Translational regulator CsrA (71 aa).

The protein belongs to the CsrA/RsmA family. In terms of assembly, homodimer; the beta-strands of each monomer intercalate to form a hydrophobic core, while the alpha-helices form wings that extend away from the core.

It is found in the cytoplasm. A translational regulator that binds mRNA to regulate translation initiation and/or mRNA stability. Usually binds in the 5'-UTR at or near the Shine-Dalgarno sequence preventing ribosome-binding, thus repressing translation. Its main target seems to be the major flagellin gene, while its function is anatagonized by FliW. The chain is Translational regulator CsrA from Clostridium botulinum (strain Alaska E43 / Type E3).